The chain runs to 1070 residues: Duffy receptor gamma form (1070 aa).

Residues 1–21 (MEGKKKRPLFFLLVLLLSHKA) form the signal peptide. Residues 22 to 1003 (NNVLFERMNG…SYECFTKGSS (982 aa)) lie on the Extracellular side of the membrane. 2 N-linked (GlcNAc...) asparagine glycosylation sites follow: N134 and N179. 2 cysteine pairs are disulfide-bonded: C214-C243 and C227-C234. The Cell attachment site signature appears at 279 to 281 (RGD). Intrachain disulfides connect C296–C372, C410–C427, C422–C502, and C431–C500. A disordered region spans residues 518 to 912 (VGSGVESKAP…LNNRKLNRDQ (395 aa)). The segment covering 526–541 (APSSNPINEAVKSSSG) has biased composition (polar residues). Composition is skewed to basic and acidic residues over residues 544 to 559 (KVQE…EGEG), 672 to 707 (GEVH…DDRS), and 714 to 731 (HTDE…KDTE). N676 is a glycosylation site (N-linked (GlcNAc...) asparagine). Polar residues predominate over residues 732–763 (TTGGSTLTPEQNVSVASDNGNVPGSGNKQNEG). N-linked (GlcNAc...) asparagine glycosylation occurs at N743. The segment covering 766–776 (ALSGAESLESS) has biased composition (low complexity). Residue N785 is glycosylated (N-linked (GlcNAc...) asparagine). The segment covering 796–807 (GNEKDFQKHDFM) has biased composition (basic and acidic residues). The span at 814–863 (DQTSSDHTSSDQTSSDQTSSDQTSSDQTSSDQTSSDQTSSDQTSSDQTID) shows a compositional bias: low complexity. The segment covering 864–888 (TEGHHRDNVRNPEIKSSEDMSKGDF) has biased composition (basic and acidic residues). Positions 890–906 (RNSNSNELYSHNNLNNR) are enriched in polar residues. N-linked (GlcNAc...) asparagine glycosylation occurs at N936. Residues 1004–1025 (TGIVYFATGGAFLIILLLFASW) traverse the membrane as a helical segment. Residues 1026 to 1070 (NAASNDYEEEATFDEFEEYCYNIHRTPQMPNDIEHMQQFTPLDYS) lie on the Cytoplasmic side of the membrane.

The protein resides in the membrane. In terms of biological role, binds to Neu5Gc-sialylated receptors on macaque erythrocytes. This is Duffy receptor gamma form from Plasmodium knowlesi.